We begin with the raw amino-acid sequence, 139 residues long: Metallothiol transferase FosB (139 aa).

The VOC domain occupies G4–G119. H7, H66, and E115 together coordinate Mg(2+). The active-site Proton donor/acceptor is the E115.

It belongs to the fosfomycin resistance protein family. FosB subfamily. As to quaternary structure, homodimer. It depends on Mg(2+) as a cofactor.

The protein resides in the cytoplasm. In terms of biological role, metallothiol transferase which confers resistance to fosfomycin by catalyzing the addition of a thiol cofactor to fosfomycin. L-cysteine is probably the physiological thiol donor. The polypeptide is Metallothiol transferase FosB (Staphylococcus epidermidis).